The primary structure comprises 402 residues: MSKVKKVVLAYSGGLDTSAIIPWLKETYDDCEIIAFCADVGQGAEELVGLEEKALASGASECHIVDLKEEFVKDYIYPTMASGAVYEGTYLLGTAMARPIIAKAQVEVALKVGADALCHGCTGKGNDQIRFESCFAALAPELQVIAPWREWEMESREDLLDYLAERNIETTASATKIYSRDANAWHISHEGGELENPWNAPSKGVWTLTVDPEDAPDKPEYLTIKVENARVVAVDGVELSPYDALMLLNEKAAAHGVGRVDITENRTVGMKSRGCYETPGGTVMVAALRGIDELVHDKPARKWRDQVGQEFTHLVYDGRWFTPLCGSLLAASEALAKDVNGEVVVKMYKGQVTAEQKRSPNSLYSEEFATFGDDNVYNQKHAEGFIRLYSLSSRIRTLNSKK.

Residues 10 to 18 (AYSGGLDTS) and Ala-38 contribute to the ATP site. Tyr-90 lines the L-citrulline pocket. Gly-120 is an ATP binding site. L-aspartate is bound by residues Thr-122, Asn-126, and Asp-127. An L-citrulline-binding site is contributed by Asn-126. L-citrulline contacts are provided by Arg-130, Ser-179, Ser-188, Glu-264, and Tyr-276.

Belongs to the argininosuccinate synthase family. Type 1 subfamily. As to quaternary structure, homotetramer.

Its subcellular location is the cytoplasm. It carries out the reaction L-citrulline + L-aspartate + ATP = 2-(N(omega)-L-arginino)succinate + AMP + diphosphate + H(+). The protein operates within amino-acid biosynthesis; L-arginine biosynthesis; L-arginine from L-ornithine and carbamoyl phosphate: step 2/3. This chain is Argininosuccinate synthase, found in Psychromonas ingrahamii (strain DSM 17664 / CCUG 51855 / 37).